We begin with the raw amino-acid sequence, 195 residues long: Imidazoleglycerol-phosphate dehydratase (195 aa).

Belongs to the imidazoleglycerol-phosphate dehydratase family.

The protein resides in the cytoplasm. The catalysed reaction is D-erythro-1-(imidazol-4-yl)glycerol 3-phosphate = 3-(imidazol-4-yl)-2-oxopropyl phosphate + H2O. It participates in amino-acid biosynthesis; L-histidine biosynthesis; L-histidine from 5-phospho-alpha-D-ribose 1-diphosphate: step 6/9. The sequence is that of Imidazoleglycerol-phosphate dehydratase from Geobacter sulfurreducens (strain ATCC 51573 / DSM 12127 / PCA).